The primary structure comprises 585 residues: RNA polymerase sigma factor RpoD (585 aa).

The tract at residues 67-93 is disordered; the sequence is PASTLVPKDDSKPARKKKESSASTSGS. Residues 351–421 form a sigma-70 factor domain-2 region; the sequence is LVKANLRLVV…TRAISDQART (71 aa). The Interaction with polymerase core subunit RpoC motif lies at 375–378; sequence DLIQ. The segment at 430–506 is sigma-70 factor domain-3; that stretch reads EQVNKVIRET…DTEVETPVNA (77 aa). The segment at 519–572 is sigma-70 factor domain-4; that stretch reads VLHTLPAREQKVIRMRFGLDDGYPQTLEEVGYQFKVTRERIRQIEAKALRRLRH. A DNA-binding region (H-T-H motif) is located at residues 545 to 564; sequence LEEVGYQFKVTRERIRQIEA.

The protein belongs to the sigma-70 factor family. RpoD/SigA subfamily. As to quaternary structure, interacts transiently with the RNA polymerase catalytic core.

It is found in the cytoplasm. Functionally, sigma factors are initiation factors that promote the attachment of RNA polymerase to specific initiation sites and are then released. This sigma factor is the primary sigma factor during exponential growth. This is RNA polymerase sigma factor RpoD from Leptospira interrogans serogroup Icterohaemorrhagiae serovar copenhageni (strain Fiocruz L1-130).